A 389-amino-acid chain; its full sequence is Chalcone synthase 2 (389 aa).

Position 55-62 (55-62) interacts with CoA; that stretch reads KFQRMCDK. Cys-164 (acyl-thioester intermediate) is an active-site residue. Substrate is bound by residues Thr-197 and 216 to 217; that span reads GD. Ala-308 lines the CoA pocket.

It belongs to the thiolase-like superfamily. Chalcone/stilbene synthases family. In terms of assembly, homodimer.

The enzyme catalyses (E)-4-coumaroyl-CoA + 3 malonyl-CoA + 3 H(+) = 2',4,4',6'-tetrahydroxychalcone + 3 CO2 + 4 CoA. The protein operates within secondary metabolite biosynthesis; flavonoid biosynthesis. Functionally, the primary product of this enzyme is 4,2',4',6'-tetrahydroxychalcone (also termed naringenin-chalcone or chalcone) which can under specific conditions spontaneously isomerize into naringenin. The protein is Chalcone synthase 2 (CHS2) of Medicago sativa (Alfalfa).